The chain runs to 391 residues: Oxygen-dependent coproporphyrinogen-III oxidase, chloroplastic (391 aa).

Residues 1–13 show a composition bias toward polar residues; the sequence is MASSLLTTPSQTL. Residues 1–34 form a disordered region; that stretch reads MASSLLTTPSQTLAPNPAAARARRSSPAAAQVSF. Low complexity predominate over residues 14–30; sequence APNPAAARARRSSPAAA. The interval 125–134 is important for dimerization; it reads VLQDGNVFEK. Ser179 serves as a coordination point for substrate. The active-site Proton donor is His193. Residues 195-197 and 349-354 each bind substrate; these read NYR and GGRIES. The tract at residues 331–366 is important for dimerization; the sequence is YVEFNLVYDRGTTFGLKTGGRIESILVSLPLTARWE.

Belongs to the aerobic coproporphyrinogen-III oxidase family. As to quaternary structure, homodimer.

Its subcellular location is the plastid. The protein localises to the chloroplast. The catalysed reaction is coproporphyrinogen III + O2 + 2 H(+) = protoporphyrinogen IX + 2 CO2 + 2 H2O. The protein operates within porphyrin-containing compound metabolism; protoporphyrin-IX biosynthesis; protoporphyrinogen-IX from coproporphyrinogen-III (O2 route): step 1/1. Involved in the heme and chlorophyll biosynthesis. Catalyzes the aerobic oxidative decarboxylation of propionate groups of rings A and B of coproporphyrinogen-III to yield the vinyl groups in protoporphyrinogen-IX. The polypeptide is Oxygen-dependent coproporphyrinogen-III oxidase, chloroplastic (CPX) (Hordeum vulgare (Barley)).